The chain runs to 237 residues: MSQPIYKRILLKLSGEALQGEDGLGIDPAILDRMAVEIKELVEMGVEVGVVLGGGNLFRGAKLAKAGMNRVVGDHMGMLATVMNGLAMRDSLFRADVNAKLMSAFQLNGICDTYNWSEAIKMLREKRVVIFSAGTGNPFFTTDSTACLRGIEIEADVVLKATKVDGVYDCDPAKNPDAKLYKNLTYAEVIDKELKVMDLSAFTLARDHGMPIRVFNMGKPGALRQVVTGTEEGTTIC.

An ATP-binding site is contributed by 12-15; the sequence is KLSG. An involved in allosteric activation by GTP region spans residues 20 to 25; it reads GEDGLG. G54 serves as a coordination point for UMP. Residues G55 and R59 each contribute to the ATP site. Residues D74 and 135–142 contribute to the UMP site; that span reads TGNPFFTT. ATP contacts are provided by T162, Y168, and D171.

This sequence belongs to the UMP kinase family. Homohexamer.

It is found in the cytoplasm. The catalysed reaction is UMP + ATP = UDP + ADP. It functions in the pathway pyrimidine metabolism; CTP biosynthesis via de novo pathway; UDP from UMP (UMPK route): step 1/1. Allosterically activated by GTP. Inhibited by UTP. Its function is as follows. Catalyzes the reversible phosphorylation of UMP to UDP. This chain is Uridylate kinase, found in Haemophilus influenzae (strain 86-028NP).